The chain runs to 393 residues: GDP-4-keto-6-deoxy-D-mannose 3-dehydratase (393 aa).

30 to 33 (NMFT) is a GDP-4-dehydro-alpha-D-rhamnose binding site. A helical transmembrane segment spans residues 53-73 (YSVMVSSGSTANLLMIAALFF). Pyridoxal 5'-phosphate-binding positions include 60 to 61 (GS), W92, E166, and S187. H192 acts as the Proton donor/acceptor in catalysis. Residue H219 participates in L-glutamate binding. Residue R223 coordinates GDP-4-dehydro-alpha-D-rhamnose. N252 contributes to the pyridoxal 5'-phosphate binding site. L-glutamate is bound at residue R254. Residue E333 coordinates GDP-4-dehydro-alpha-D-rhamnose.

This sequence belongs to the DegT/DnrJ/EryC1 family. In terms of assembly, homodimer. The cofactor is pyridoxal 5'-phosphate.

The protein localises to the cell membrane. The enzyme catalyses GDP-4-dehydro-alpha-D-rhamnose + L-glutamate = GDP-4-dehydro-3,6-dideoxy-alpha-D-mannose + 2-oxoglutarate + NH4(+). It functions in the pathway nucleotide-sugar metabolism; GDP-L-colitose biosynthesis. Functionally, involved in the biosynthesis of L-colitose, a 3,6-dideoxyhexose present in the O-antigen region of lipopolysaccharides (LPS), where it serves as an antigenic determinant and is vital for bacterial defense and survival. Catalyzes the removal of the C3'-hydroxyl group from GDP-4-keto-6-deoxy-D-mannose via a combined transamination-deoxygenation reaction. The catalysis is initiated by a transamination step in which pyridoxal 5'-phosphate (PLP) is converted to pyridoxamine 5'-phosphate (PMP) in the presence of L-glutamate. This coenzyme then forms a Schiff base with GDP-4-keto-6-deoxy-D-mannose and the resulting adduct undergoes a PMP-mediated beta-dehydration reaction to give a sugar enamine intermediate, which after tautomerization and hydrolysis to release ammonia yields GDP-4-keto-3,6-dideoxy-D-mannose as a product. In Yersinia pseudotuberculosis, this protein is GDP-4-keto-6-deoxy-D-mannose 3-dehydratase.